Consider the following 135-residue polypeptide: VapC ribonuclease aq_1901 (135 aa).

The PINc domain maps to 3-130; it reads LLDTTVLLDF…FKKLGFKTVN (128 aa). Asp-5 serves as a coordination point for Mg(2+).

It belongs to the PINc/VapC protein family. The cofactor is Mg(2+).

Functionally, toxic component of a type II toxin-antitoxin (TA) system. An RNase. This Aquifex aeolicus (strain VF5) protein is VapC ribonuclease aq_1901.